The primary structure comprises 296 residues: Phosphoribosylaminoimidazole-succinocarboxamide synthase (296 aa).

Belongs to the SAICAR synthetase family.

It carries out the reaction 5-amino-1-(5-phospho-D-ribosyl)imidazole-4-carboxylate + L-aspartate + ATP = (2S)-2-[5-amino-1-(5-phospho-beta-D-ribosyl)imidazole-4-carboxamido]succinate + ADP + phosphate + 2 H(+). It participates in purine metabolism; IMP biosynthesis via de novo pathway; 5-amino-1-(5-phospho-D-ribosyl)imidazole-4-carboxamide from 5-amino-1-(5-phospho-D-ribosyl)imidazole-4-carboxylate: step 1/2. In Pelobacter propionicus (strain DSM 2379 / NBRC 103807 / OttBd1), this protein is Phosphoribosylaminoimidazole-succinocarboxamide synthase.